A 188-amino-acid polypeptide reads, in one-letter code: Thymidine kinase (188 aa).

17–24 contacts ATP; it reads GPMFAGKT. The Proton acceptor role is filled by Glu-92. Phe-121 lines the substrate pocket. Residues Cys-146 and Cys-149 each contribute to the Zn(2+) site. Residue 166–170 coordinates substrate; sequence LILAG. Zn(2+) contacts are provided by Cys-179 and Cys-182.

The protein belongs to the thymidine kinase family.

The enzyme catalyses thymidine + ATP = dTMP + ADP + H(+). In terms of biological role, phosphorylates thymidine. ASFV replicates in the cytoplasm of infected cells and contains genes encoding a number of enzymes needed for DNA synthesis, including thymidine kinase. Important for growth in swine macrophages in vitro and is a virus virulence factor in swine. The protein is Thymidine kinase of Ornithodoros (relapsing fever ticks).